Here is a 60-residue protein sequence, read N- to C-terminus: Prokaryotic ubiquitin-like protein UBact (60 aa).

The segment at Met-1–Glu-60 is disordered. Over residues Pro-29–Gln-50 the composition is skewed to basic and acidic residues. The segment covering Ala-51–Glu-60 has biased composition (basic residues). Glu-60 is covalently cross-linked (Isoglutamyl lysine isopeptide (Glu-Lys) (interchain with K-? in acceptor proteins)).

It belongs to the ubiquitin-like protein UBact family.

Functionally, may function as a protein modifier covalently attached to lysine residues of substrate proteins. This may serve to target the modified proteins for degradation by proteasomes. The sequence is that of Prokaryotic ubiquitin-like protein UBact from Fraserbacteria sp. (strain RBG_16_55_9).